Consider the following 509-residue polypeptide: Bifunctional purine biosynthesis protein PurH (509 aa).

Residues 1–144 form the MGS-like domain; it reads MKRALISVSD…KNYAAVTVVV (144 aa).

It belongs to the PurH family.

The enzyme catalyses (6R)-10-formyltetrahydrofolate + 5-amino-1-(5-phospho-beta-D-ribosyl)imidazole-4-carboxamide = 5-formamido-1-(5-phospho-D-ribosyl)imidazole-4-carboxamide + (6S)-5,6,7,8-tetrahydrofolate. The catalysed reaction is IMP + H2O = 5-formamido-1-(5-phospho-D-ribosyl)imidazole-4-carboxamide. The protein operates within purine metabolism; IMP biosynthesis via de novo pathway; 5-formamido-1-(5-phospho-D-ribosyl)imidazole-4-carboxamide from 5-amino-1-(5-phospho-D-ribosyl)imidazole-4-carboxamide (10-formyl THF route): step 1/1. Its pathway is purine metabolism; IMP biosynthesis via de novo pathway; IMP from 5-formamido-1-(5-phospho-D-ribosyl)imidazole-4-carboxamide: step 1/1. The protein is Bifunctional purine biosynthesis protein PurH of Listeria monocytogenes serotype 4a (strain HCC23).